A 440-amino-acid chain; its full sequence is Chromosome partition protein MukF (440 aa).

The interval 208–236 is leucine-zipper; the sequence is LSETSGTLRELQDTLEAAGDKLQANLLRI.

The protein belongs to the MukF family. In terms of assembly, interacts, and probably forms a ternary complex, with MukE and MukB via its C-terminal region. The complex formation is stimulated by calcium or magnesium. It is required for an interaction between MukE and MukB.

It is found in the cytoplasm. The protein localises to the nucleoid. Its function is as follows. Involved in chromosome condensation, segregation and cell cycle progression. May participate in facilitating chromosome segregation by condensation DNA from both sides of a centrally located replisome during cell division. Not required for mini-F plasmid partitioning. Probably acts via its interaction with MukB and MukE. Overexpression results in anucleate cells. It has a calcium binding activity. The polypeptide is Chromosome partition protein MukF (Escherichia coli O17:K52:H18 (strain UMN026 / ExPEC)).